We begin with the raw amino-acid sequence, 375 residues long: Queuine tRNA-ribosyltransferase (375 aa).

Residue aspartate 90 is the Proton acceptor of the active site. Residues 90-94 (DSGGF), aspartate 144, glutamine 193, and glycine 220 each bind substrate. The RNA binding stretch occupies residues 251-257 (GVGTPED). The active-site Nucleophile is the aspartate 270. The RNA binding; important for wobble base 34 recognition stretch occupies residues 275-279 (TRNAR). Positions 308, 310, 313, and 339 each coordinate Zn(2+).

It belongs to the queuine tRNA-ribosyltransferase family. In terms of assembly, homodimer. Within each dimer, one monomer is responsible for RNA recognition and catalysis, while the other monomer binds to the replacement base PreQ1. Zn(2+) serves as cofactor.

It carries out the reaction 7-aminomethyl-7-carbaguanine + guanosine(34) in tRNA = 7-aminomethyl-7-carbaguanosine(34) in tRNA + guanine. It functions in the pathway tRNA modification; tRNA-queuosine biosynthesis. Its function is as follows. Catalyzes the base-exchange of a guanine (G) residue with the queuine precursor 7-aminomethyl-7-deazaguanine (PreQ1) at position 34 (anticodon wobble position) in tRNAs with GU(N) anticodons (tRNA-Asp, -Asn, -His and -Tyr). Catalysis occurs through a double-displacement mechanism. The nucleophile active site attacks the C1' of nucleotide 34 to detach the guanine base from the RNA, forming a covalent enzyme-RNA intermediate. The proton acceptor active site deprotonates the incoming PreQ1, allowing a nucleophilic attack on the C1' of the ribose to form the product. After dissociation, two additional enzymatic reactions on the tRNA convert PreQ1 to queuine (Q), resulting in the hypermodified nucleoside queuosine (7-(((4,5-cis-dihydroxy-2-cyclopenten-1-yl)amino)methyl)-7-deazaguanosine). The protein is Queuine tRNA-ribosyltransferase of Janthinobacterium sp. (strain Marseille) (Minibacterium massiliensis).